We begin with the raw amino-acid sequence, 463 residues long: Argininosuccinate lyase (463 aa).

The 2-(N(omega)-L-arginino)succinate site is built by Ser27, Asn115, and Thr161. The active-site Proton acceptor is the His162. Catalysis depends on Ser283, which acts as the Proton donor. Residues Asn291, Tyr323, Gln328, and Lys331 each contribute to the 2-(N(omega)-L-arginino)succinate site.

This sequence belongs to the lyase 1 family. Argininosuccinate lyase subfamily. In terms of assembly, homotetramer.

It catalyses the reaction 2-(N(omega)-L-arginino)succinate = fumarate + L-arginine. It functions in the pathway amino-acid biosynthesis; L-arginine biosynthesis; L-arginine from L-ornithine and carbamoyl phosphate: step 3/3. This is Argininosuccinate lyase (ARG4) from Saccharomyces paradoxus (Yeast).